The chain runs to 104 residues: Ig kappa chain b5 variant C region (104 aa).

An Ig-like domain is found at 5–100; sequence PTVLIFPPSP…SGSPVVQSFS (96 aa). Cys26 and Cys85 are oxidised to a cystine.

In Oryctolagus cuniculus (Rabbit), this protein is Ig kappa chain b5 variant C region.